Reading from the N-terminus, the 711-residue chain is Origin recognition complex subunit 3 (711 aa).

Phosphoserine is present on residues serine 23 and serine 516.

Belongs to the ORC3 family. In terms of assembly, component of ORC, a complex composed of at least 6 subunits: ORC1, ORC2, ORC3, ORC4, ORC5 and ORC6. ORC is regulated in a cell-cycle dependent manner. It is sequentially assembled at the exit from anaphase of mitosis and disassembled as cells enter S phase. Post-translationally, multi-mono-ubiquitinated by OBI1; ubiquitination is important for efficient DNA replication origin site activation. Ubiquitination levels are low in mitotic and early G1-phAse cells and are induced in late G1-/early S-phase, peaking in S-phase and decrease toward the end of the cell cycle.

The protein localises to the nucleus. Its subcellular location is the chromosome. Functionally, component of the origin recognition complex (ORC) that binds origins of replication. DNA-binding is ATP-dependent. The specific DNA sequences that define origins of replication have not been identified yet. ORC is required to assemble the pre-replication complex necessary to initiate DNA replication. Binds histone H3 and H4 trimethylation marks H3K9me3, H3K27me3 and H4K20me3. This is Origin recognition complex subunit 3 (ORC3) from Homo sapiens (Human).